The chain runs to 348 residues: Protein RecA (348 aa).

64 to 71 (GPESSGKT) is a binding site for ATP. Residues 325-335 (YEIDGSSKEPL) are compositionally biased toward basic and acidic residues. Positions 325-348 (YEIDGSSKEPLDEKEETLSLLDDE) are disordered.

This sequence belongs to the RecA family.

It is found in the cytoplasm. Can catalyze the hydrolysis of ATP in the presence of single-stranded DNA, the ATP-dependent uptake of single-stranded DNA by duplex DNA, and the ATP-dependent hybridization of homologous single-stranded DNAs. It interacts with LexA causing its activation and leading to its autocatalytic cleavage. The protein is Protein RecA of Listeria monocytogenes serotype 1/2a (strain 10403S).